The following is a 242-amino-acid chain: Peptidase E (242 aa).

Catalysis depends on charge relay system residues S123, D138, and H160.

Belongs to the peptidase S51 family.

It localises to the cytoplasm. The catalysed reaction is Dipeptidase E catalyzes the hydrolysis of dipeptides Asp-|-Xaa. It does not act on peptides with N-terminal Glu, Asn or Gln, nor does it cleave isoaspartyl peptides.. Functionally, hydrolyzes dipeptides containing N-terminal aspartate residues. May play a role in allowing the cell to use peptide aspartate to spare carbon otherwise required for the synthesis of the aspartate family of amino acids. In Nostoc sp. (strain PCC 7120 / SAG 25.82 / UTEX 2576), this protein is Peptidase E.